The chain runs to 141 residues: HTH-type transcriptional regulator LrpA (141 aa).

In terms of domain architecture, HTH asnC-type spans 2–63; sequence IDERDKIILE…RINPKKLGYS (62 aa). A DNA-binding region (H-T-H motif) is located at residues 21–40; the sequence is FTEIAKKLGISETAVRKRVK.

As to quaternary structure, homooctamer; tetramer of dimers.

DNA-binding protein that negatively regulates its own transcription. Interferes with RNA polymerase (RNAP) recruitment by inhibiting the association of RNAP with the TBP-TFB promoter complex. This chain is HTH-type transcriptional regulator LrpA (lrpA), found in Pyrococcus horikoshii (strain ATCC 700860 / DSM 12428 / JCM 9974 / NBRC 100139 / OT-3).